Here is a 225-residue protein sequence, read N- to C-terminus: Glucosyl-3-phosphoglycerate phosphatase (225 aa).

Substrate is bound at residue Arg-10. His-11 serves as the catalytic Tele-phosphohistidine intermediate. Substrate is bound at residue Arg-60. The active-site Proton donor/acceptor is the Glu-84. Position 158 (His-158) interacts with substrate.

It belongs to the phosphoglycerate mutase family. Homodimer.

It catalyses the reaction (2R)-2-O-(alpha-D-glucopyranosyl)-3-phospho-glycerate + H2O = (2R)-2-O-(alpha-D-glucopyranosyl)-glycerate + phosphate. Its function is as follows. Involved in the biosynthesis of mycobacterial methylglucose lipopolysaccharides (MGLP). Catalyzes the dephosphorylation of glucosyl-3-phosphoglycerate (GPG) to glucosylglycerate. The chain is Glucosyl-3-phosphoglycerate phosphatase from Mycolicibacterium vanbaalenii (strain DSM 7251 / JCM 13017 / BCRC 16820 / KCTC 9966 / NRRL B-24157 / PYR-1) (Mycobacterium vanbaalenii).